A 997-amino-acid chain; its full sequence is Glutamate [NMDA] receptor subunit 1 (997 aa).

The first 26 residues, 1–26 (MAVAEFVFCWPLFELAIVLLVAPIHA), serve as a signal peptide directing secretion. The Extracellular segment spans residues 27–573 (AQRHTASDNP…TLVSFLQPFS (547 aa)). N-linked (GlcNAc...) asparagine glycosylation is found at Asn258, Asn314, Asn345, Asn397, Asn454, Asn481, and Asn501. Residues 530–532 (PLT) and Arg537 contribute to the glycine site. A helical transmembrane segment spans residues 574-594 (NTLWILVMVSVHVVALVLYLL). The Cytoplasmic segment spans residues 595–651 (DRFSPFGRFKLSHSDSNEEKALNLSSAVWFAWGVLLNSGIGEGTPRSFSARVLGMVW). Residues 652-672 (AGFAMIIVASYTANLAAFLVL) traverse the membrane as a helical segment. The Extracellular segment spans residues 673–831 (ERPKTKLSGI…KTPNTLGLKN (159 aa)). The N-linked (GlcNAc...) asparagine glycan is linked to Asn693. Glycine-binding residues include Ser703 and Asp747. Residues 832 to 852 (MAGVFILVGVGIAGGVGLIII) traverse the membrane as a helical segment. Over 853 to 997 (EVIYKKHQVK…YTSDVSHLVV (145 aa)) the chain is Cytoplasmic. Residues 947 to 997 (ELGKPGQSPKVMSANQPGMPMPMLGKTRPQQSVLPPRYSPGYTSDVSHLVV) form a disordered region. The span at 987–997 (GYTSDVSHLVV) shows a compositional bias: polar residues.

The protein belongs to the glutamate-gated ion channel (TC 1.A.10.1) family. As to quaternary structure, forms a heteromeric NMDA channel with Nmdar2.

It localises to the cell membrane. The protein localises to the postsynaptic cell membrane. Its subcellular location is the postsynaptic density. NMDA receptor subtype of glutamate-gated ion channels with high calcium permeability and voltage-dependent sensitivity to magnesium. Mediated by glycine. This protein plays a key role in synaptic plasticity, synaptogenesis, excitotoxicity, memory acquisition and learning. It mediates neuronal functions in glutamate neurotransmission. Is involved in the cell surface targeting of NMDA receptors. Plays a role in associative learning and in long-term memory consolidation. In Drosophila erecta (Fruit fly), this protein is Glutamate [NMDA] receptor subunit 1.